The chain runs to 271 residues: Tryptophan synthase alpha chain (271 aa).

Active-site proton acceptor residues include E49 and D60.

The protein belongs to the TrpA family. As to quaternary structure, tetramer of two alpha and two beta chains.

The enzyme catalyses (1S,2R)-1-C-(indol-3-yl)glycerol 3-phosphate + L-serine = D-glyceraldehyde 3-phosphate + L-tryptophan + H2O. It functions in the pathway amino-acid biosynthesis; L-tryptophan biosynthesis; L-tryptophan from chorismate: step 5/5. The alpha subunit is responsible for the aldol cleavage of indoleglycerol phosphate to indole and glyceraldehyde 3-phosphate. The polypeptide is Tryptophan synthase alpha chain (Burkholderia pseudomallei (strain K96243)).